Consider the following 368-residue polypeptide: MFYYLYDLYFNHLDSLRIFSYVTFRALMAGLTSMLVTFWFGHKIIDFLYGLKFRESVRDDGPKSHEIKKGTPTMGGLLIIGSLLISVLLWGNLKNPNVILLSVFSLSFSVLGFADDYMKSVKKIKGGMRARTKFILSILISFIFCILFFYYTGTTGQTGKISFQLTDLFFPFIKGPVIALGIIAIPFSILVIIGSSHAVNLTDGLDGLATGTVLISVMTLGVIAYFSGTPIVANYLNIPYLPGAHEYSVFLSALTGALFGFLWFNAHPAQVFMGDTGSLFLGATLGMIVILLKKEILLLILGAIFVSEALSVILQVGSFKLTGKRIFKMAPLHHHFELGGLKETKIVIRFWIIAVILAIISLSTLKIQ.

The next 10 membrane-spanning stretches (helical) occupy residues Leu31 to Leu51, Thr73 to Leu93, Val98 to Met118, Phe134 to Thr154, Gly175 to Ser195, Val213 to Ala233, Val249 to Ala269, Val271 to Leu291, Ile296 to Val316, and Lys345 to Leu365.

This sequence belongs to the glycosyltransferase 4 family. MraY subfamily. Mg(2+) is required as a cofactor.

The protein resides in the cell inner membrane. The catalysed reaction is UDP-N-acetyl-alpha-D-muramoyl-L-alanyl-gamma-D-glutamyl-meso-2,6-diaminopimeloyl-D-alanyl-D-alanine + di-trans,octa-cis-undecaprenyl phosphate = di-trans,octa-cis-undecaprenyl diphospho-N-acetyl-alpha-D-muramoyl-L-alanyl-D-glutamyl-meso-2,6-diaminopimeloyl-D-alanyl-D-alanine + UMP. It functions in the pathway cell wall biogenesis; peptidoglycan biosynthesis. Its function is as follows. Catalyzes the initial step of the lipid cycle reactions in the biosynthesis of the cell wall peptidoglycan: transfers peptidoglycan precursor phospho-MurNAc-pentapeptide from UDP-MurNAc-pentapeptide onto the lipid carrier undecaprenyl phosphate, yielding undecaprenyl-pyrophosphoryl-MurNAc-pentapeptide, known as lipid I. This is Phospho-N-acetylmuramoyl-pentapeptide-transferase from Leptospira interrogans serogroup Icterohaemorrhagiae serovar copenhageni (strain Fiocruz L1-130).